Consider the following 268-residue polypeptide: Tryptophan synthase alpha chain (268 aa).

Active-site proton acceptor residues include Glu49 and Asp60.

Belongs to the TrpA family. Tetramer of two alpha and two beta chains.

The enzyme catalyses (1S,2R)-1-C-(indol-3-yl)glycerol 3-phosphate + L-serine = D-glyceraldehyde 3-phosphate + L-tryptophan + H2O. It participates in amino-acid biosynthesis; L-tryptophan biosynthesis; L-tryptophan from chorismate: step 5/5. In terms of biological role, the alpha subunit is responsible for the aldol cleavage of indoleglycerol phosphate to indole and glyceraldehyde 3-phosphate. This chain is Tryptophan synthase alpha chain, found in Vibrio cholerae serotype O1 (strain ATCC 39541 / Classical Ogawa 395 / O395).